We begin with the raw amino-acid sequence, 941 residues long: Isoleucine--tRNA ligase (941 aa).

The 'HIGH' region signature appears at 58 to 68; sequence PYANGDIHIGH. An L-isoleucyl-5'-AMP-binding site is contributed by Glu562. Positions 603–607 match the 'KMSKS' region motif; it reads KMSKS. Lys606 is an ATP binding site. Cys904, Cys907, Cys924, and Cys927 together coordinate Zn(2+).

This sequence belongs to the class-I aminoacyl-tRNA synthetase family. IleS type 1 subfamily. Monomer. Zn(2+) serves as cofactor.

Its subcellular location is the cytoplasm. It carries out the reaction tRNA(Ile) + L-isoleucine + ATP = L-isoleucyl-tRNA(Ile) + AMP + diphosphate. Functionally, catalyzes the attachment of isoleucine to tRNA(Ile). As IleRS can inadvertently accommodate and process structurally similar amino acids such as valine, to avoid such errors it has two additional distinct tRNA(Ile)-dependent editing activities. One activity is designated as 'pretransfer' editing and involves the hydrolysis of activated Val-AMP. The other activity is designated 'posttransfer' editing and involves deacylation of mischarged Val-tRNA(Ile). This Alkalilimnicola ehrlichii (strain ATCC BAA-1101 / DSM 17681 / MLHE-1) protein is Isoleucine--tRNA ligase.